Here is a 672-residue protein sequence, read N- to C-terminus: Leucine-rich repeat receptor-like protein kinase PXC1 (672 aa).

The signal sequence occupies residues 1 to 21 (MAAKPLLLPLLLLLHLSITLA). The Extracellular portion of the chain corresponds to 22 to 269 (QNDTNALTLF…IHSHRGIKPG (248 aa)). N-linked (GlcNAc...) asparagine glycosylation is found at asparagine 23, asparagine 44, and asparagine 101. The LRR 1 repeat unit spans residues 87–110 (LDQLRLLDLHDNRLNGTVSPLTNC). Residue lysine 111 forms a Glycyl lysine isopeptide (Lys-Gly) (interchain with G-Cter in ubiquitin) linkage. LRR repeat units lie at residues 112–134 (NLRL…ISFL), 135–158 (KRMI…ILGF), 160–181 (RVLT…FSQM), and 182–205 (KSLL…VVKK). N-linked (GlcNAc...) asparagine glycans are attached at residues asparagine 188 and asparagine 197. Positions 233 to 249 (ESSNTDQIVPSNPTSIP) are enriched in polar residues. Residues 233-254 (ESSNTDQIVPSNPTSIPHSPVS) are disordered. Residues 270 to 290 (IIAAVIGGCVAVIVLVSFGFA) traverse the membrane as a helical segment. At 291–672 (FCCGRLDRNG…MSPSLATTDG (382 aa)) the chain is on the cytoplasmic side. The tract at residues 300 to 333 (GERSKSGSVETGFVGGGEGKRRSSYGEGGESDAT) is disordered. The 289-residue stretch at 357–645 (KASAEMLGKG…AEVVKMVEEI (289 aa)) folds into the Protein kinase domain. ATP is bound by residues 363-371 (LGKGSLGTV) and lysine 386. Positions 650–672 (SPVGEDFDESRNSMSPSLATTDG) are disordered. The span at 661 to 672 (NSMSPSLATTDG) shows a compositional bias: polar residues.

This sequence belongs to the protein kinase superfamily. Ser/Thr protein kinase family. Expressed in the vascular strands of cotyledons, the shoot apex, hypocotyls, roots, leaves, stems and flowers.

It localises to the cell membrane. Leucine-rich repeat receptor-like protein kinase involved in secondary cell wall formation in xylem fibers. May play a role in a regulatory network which also incorporates the TDR/PXY signaling pathway and regulates the maturation of interfascicular fiber cells. May promote the initiation of secondary cell wall deposition during the procedure of cell expansion. In Arabidopsis thaliana (Mouse-ear cress), this protein is Leucine-rich repeat receptor-like protein kinase PXC1.